The primary structure comprises 1082 residues: MSDSEDSNFSEEEDSERSSEAEEAEVEEDQRSAAGSEKEEEPEEEEEEEEEYDEEEEEEDDDRPPKKPRHGGFILDEADVDDEYEDEDQWEDGAEDILEKEEIEASNIDNVVLDEDRSGARRLQNLWRDQREEELGEYYMKKYAKSSVGETVYGGSDELSDDITQQQLLPGVKDPNLWTVKCKIGEERATAISLMRKFIAYQFTDTPLQIKSVVAPEHVKGYIYVEAYKQTHVKQAIEGVGNLRLGYWNQQMVPIKEMTDVLKVVKEVANLKPKSWVRLKRGIYKDDIAQVDYVEPSQNTISLKMIPRIDYDRIKARMSLKDWFAKRKKFKRPPQRLFDAEKIRSLGGDVASDGDFLIFEGNRYSRKGFLFKSFAMSAVITEGVKPTLSELEKFEDQPEGIDLEVVTESTGKEREHNFQPGDNVEVCEGELINLQGKVLSVDGNKITIMPKHEDLKDMLEFPAQELRKYFKMGDHVKVIAGRFEGDTGLIVRVEENFVILFSDLTMHELKVLPRDLQLCSETASGVDVGGQHEWGELVQLDPRTVGVIVRLERETFQVLNMHGKVVTVRHQAVTQKKDNRFAVALDSDQNNIHVKDIVKVIDGPHSGREGEIRHLYRSFAFLHCKKLVENGGMFVCKARHLVLAGGSKPRDVTNLTVGGFTPMSPRISSPMHPSAEGQHGGFGSPGGMSRGRGRRDNELIGQTVRISQGPYKGYIGVVKDATESTARVELHSTCQTISVDRQRLTTVDSQRPGGMTSTYGRTPMYGSQTPMYGSGSRTPMYGSQTPLQDGSRTPHYGSQTPLHDGSRTPAQSGAWDPNNPNTPSRAEEEYEYAFDDEPTPSPQAYGGTPNPQTPGYPDPSSPQVNPQYNPQTPGTPAMYNTDQFSPYAAPSPQGSYQPSPSPQSYHQVAPSPAGYQNTHSPASYHPTPSPMAYQASPSPSPVGYSPMTPGAPSPGGYNPHTPGSGIEQNSSDWVTTDIQVKVRDTYLDTQIVGQTGVIRSVTGGMCSVYLKDSEKVVSISSEHLEPITPTKNNKVKVILGEDREATGVLLSIDGEDGIIRMDLEDQQIKILNLRFLGKLLEA.

Over residues 1 to 28 (MSDSEDSNFSEEEDSERSSEAEEAEVEE) the composition is skewed to acidic residues. The tract at residues 1–88 (MSDSEDSNFS…DVDDEYEDED (88 aa)) is disordered. S32 and S36 each carry phosphoserine. Composition is skewed to acidic residues over residues 38 to 62 (KEEE…EDDD) and 76 to 88 (DEAD…EDED). A Glycyl lysine isopeptide (Lys-Gly) (interchain with G-Cter in SUMO2) cross-link involves residue K141. Positions 174-268 (DPNLWTVKCK…TDVLKVVKEV (95 aa)) are interaction with SUPT4H1 and SUPT4H2. The KOW 1 domain maps to 271-304 (LKPKSWVRLKRGIYKDDIAQVDYVEPSQNTISLK). The interval 311–418 (YDRIKARMSL…STGKEREHNF (108 aa)) is interaction with RNA polymerase II. The UBR5-degron motif lies at 326 to 332 (KRKKFKR). KOW domains are found at residues 418 to 449 (FQPG…ITIM) and 470 to 501 (FKMG…VILF). RNA is bound at residue K577. Positions 592–625 (IHVKDIVKVIDGPHSGREGEIRHLYRSFAFLHCK) constitute a KOW 4 domain. R617 lines the DNA pocket. T661 is modified (phosphothreonine). 2 positions are modified to phosphoserine: S664 and S684. The tract at residues 669 to 694 (SPMHPSAEGQHGGFGSPGGMSRGRGR) is disordered. The span at 678–690 (QHGGFGSPGGMSR) shows a compositional bias: gly residues. Residues R690 and R692 each carry the asymmetric dimethylarginine; alternate modification. An omega-N-methylarginine; alternate mark is found at R690 and R692. R692 is subject to Symmetric dimethylarginine; alternate. Positions 698 to 731 (ELIGQTVRISQGPYKGYIGVVKDATESTARVELH) constitute a KOW 5 domain. At K712 the chain carries N6-acetyllysine. Over residues 741 to 801 (RQRLTTVDSQ…RTPHYGSQTP (61 aa)) the composition is skewed to polar residues. The interval 741–972 (RQRLTTVDSQ…GSGIEQNSSD (232 aa)) is disordered. The CTR1-1; approximate repeat unit spans residues 748 to 753 (DSQRPG). A 9 X 7 AA approximate tandem repeats of G-S-[QR]-T-P-X-[YQ], motif CTR1 region spans residues 748–811 (DSQRPGGMTS…LHDGSRTPAQ (64 aa)). One copy of the CTR1-2 repeat lies at 754-759 (GMTSTY). A CTR1-3 repeat occupies 760-765 (GRTPMY). A CTR1-4 repeat occupies 766-772 (GSQTPMY). A phosphothreonine; by CDK9 mark is found at T769 and T778. Residues 775 to 781 (GSRTPMY) form a CTR1-5 repeat. A CTR1-6 repeat occupies 782–788 (GSQTPLQ). S783 carries the phosphoserine modification. Phosphothreonine is present on residues T785 and T793. The stretch at 790–796 (GSRTPHY) is one CTR1-7 repeat. One copy of the CTR1-8 repeat lies at 797–803 (GSQTPLH). S798 bears the Phosphoserine mark. 2 positions are modified to phosphothreonine: T800 and T808. Residues 805-811 (GSRTPAQ) form a CTR1-9 repeat. Residues 828–838 (EEYEYAFDDEP) are compositionally biased toward acidic residues. Residues 838 to 845 (PTPSPQAY) form a CTR2-1 repeat. The segment at 838-944 (PTPSPQAYGG…ASPSPSPVGY (107 aa)) is 10 X 8 AA approximate tandem repeats of P-[TS]-P-S-P-[QA]-[SG]-Y, motif CTR2. A CTR2-2; approximate repeat occupies 848–856 (TPNPQTPGY). The span at 851-860 (PQTPGYPDPS) shows a compositional bias: pro residues. Residues 857-863 (PDPSSPQ) form a CTR2-3; approximate repeat. A compositionally biased stretch (polar residues) spans 861–884 (SPQVNPQYNPQTPGTPAMYNTDQF). A CTR2-4; half-length repeat occupies 875-879 (TPAMY). Residues 890 to 896 (PSPQGSY) form a CTR2-5; approximate repeat. Residues 890-905 (PSPQGSYQPSPSPQSY) are compositionally biased toward low complexity. The CTR2-6 repeat unit spans residues 898–905 (PSPSPQSY). The CTR2-7; approximate repeat unit spans residues 910 to 915 (PSPAGY). One copy of the CTR2-8 repeat lies at 918-924 (THSPASY). The CTR2-9 repeat unit spans residues 926–933 (PTPSPMAY). A CTR2-10 repeat occupies 937–944 (PSPSPVGY). The residue at position 1028 (T1028) is a Phosphothreonine. K1031 is covalently cross-linked (Glycyl lysine isopeptide (Lys-Gly) (interchain with G-Cter in SUMO2)).

This sequence belongs to the SPT5 family. In terms of assembly, interacts with SUPT4H1 to form DSIF. DSIF interacts with the positive transcription elongation factor b complex (P-TEFb complex), which is composed of CDK9 and cyclin-T (CCNT1 or CCNT2). DSIF interacts with RNA polymerase II, and this interaction is reduced by phosphorylation of the C-terminal domain (CTD) of POLR2A by P-TEFb. DSIF also interacts with the NELF complex, which is composed of NELFA, NELFB, NELFD and NELFE, and this interaction occurs following prior binding of DSIF to RNA polymerase II. Also interacts with PRMT1/HRMT1L2, HTATSF1/TATSF1, RNGTT/CAP1A, PRMT5/SKB1, SUPT6H, and can interact with PIN1. Component of a complex which is at least composed of HTATSF1/Tat-SF1, the P-TEFb complex components CDK9 and CCNT1, RNA polymerase II, SUPT5H, and NCL/nucleolin. Interacts with MCM3AP. Methylated by PRMT1/HRMT1L2 and PRMT5/SKB1. Methylation negatively regulates interaction with P-TEFb and RNA polymerase II. In terms of processing, phosphorylated by CDK7 and CDK9. Phosphorylation by P-TEFb (CDK9) at Thr residues of the C-terminal repeats alleviates transcriptional pausing and promotes transcription elongation. Dephosphorylated by the INTAC complex when transcripts are unfavorably configured for transcriptional elongation, leading to premature transcription termination: dephosphorylation is mediated by the PPP2CA component of the INTAC complex. Dephosphorylated by the PNUTS-PP1 complex in termination zones downstream of poly(A) sites, thereby promoting deceleration of RNA polymerase II transcription. Dephosphorylated by the PNUTS-PP1 complex in termination zones downstream of poly(A) sites, thereby promoting deceleration of RNA polymerase II transcription. Phosphorylation may also stimulate interaction with PIN1. Bulk phosphorylation occurs predominantly in mitosis. Post-translationally, ubiquitinated by UBR5 when not assembled in the DSIF complex, leading to its degradation: UBR5 recognizes and binds a degron that is not accessible when SUPT5H is part of the DSIF complex.

The protein resides in the nucleus. In terms of biological role, component of the DRB sensitivity-inducing factor complex (DSIF complex), which regulates mRNA processing and transcription elongation by RNA polymerase II. DSIF positively regulates mRNA capping by stimulating the mRNA guanylyltransferase activity of RNGTT/CAP1A. DSIF also acts cooperatively with the negative elongation factor complex (NELF complex) to enhance transcriptional pausing at sites proximal to the promoter. Transcriptional pausing may facilitate the assembly of an elongation competent RNA polymerase II complex. DSIF and NELF promote pausing by inhibition of the transcription elongation factor TFIIS/S-II. TFIIS/S-II binds to RNA polymerase II at transcription pause sites and stimulates the weak intrinsic nuclease activity of the enzyme. Cleavage of blocked transcripts by RNA polymerase II promotes the resumption of transcription from the new 3' terminus and may allow repeated attempts at transcription through natural pause sites. Following phosphorylation by CDK9, DSIF can also positively regulate transcriptional elongation. This chain is Transcription elongation factor SPT5 (Supt5h), found in Mus musculus (Mouse).